The following is a 297-amino-acid chain: Protoheme IX farnesyltransferase (297 aa).

Transmembrane regions (helical) follow at residues 12–32 (PGII…AAKG), 36–56 (YALF…GCVF), 85–105 (VSLV…YLAA), 108–128 (LAMW…SLYM), 133–153 (VYGT…GYCA), 163–183 (LILL…IAIF), 209–229 (ITLY…SGYA), 230–250 (GYKY…MALQ), and 266–286 (FIFS…DFMV).

The protein belongs to the UbiA prenyltransferase family. Protoheme IX farnesyltransferase subfamily.

The protein localises to the cell inner membrane. It carries out the reaction heme b + (2E,6E)-farnesyl diphosphate + H2O = Fe(II)-heme o + diphosphate. Its pathway is porphyrin-containing compound metabolism; heme O biosynthesis; heme O from protoheme: step 1/1. Its function is as follows. Converts heme B (protoheme IX) to heme O by substitution of the vinyl group on carbon 2 of heme B porphyrin ring with a hydroxyethyl farnesyl side group. In Sodalis glossinidius (strain morsitans), this protein is Protoheme IX farnesyltransferase.